A 511-amino-acid chain; its full sequence is MFDIDFGILFPISWEQSPIFLAVGLIFAFATLSPWLRSGERLINGREGFEILWTNAKKRYQTKGRSVMEAGFSKYNDSFYMMTDSGTEMVLHPRYVDEIRNDPRLDFHRYMKTKGGEINRDLIQTKLTRSVGRLIGSISAEIEDALHNRWEEGEGEYEEYLLVLPPAEMHTEWHEIVLLSVMIPVVAQGVSKMFVGDPLCRNKDWIGMILRHTRSVQTALRSLRLWPYFLRPLAARFLPTCRQVTAEIEEARRIINPVLEKKRAEKLAMIQKGEKPPEPNTYMDWLEESDKDEFYDPVVAQLKISMAAIHATSDLLSQTIFSLCDSPELVKELRAEAVSVIGAYGWGKEAIYNLKLMDSVLKETQRLKPMQINLTRLALDRIKLSDGTVIPRGSKVLISCHNMWDSNVYPNANQYDGHRFYKLRQRAGMENSAQLSTPSPDHLGFGLGMYACPGRHIASTVMKVTLCHILLKYDFELAEGCTPRVIEYGSFLLADPTARVSIRRRKEEIQL.

The chain crosses the membrane as a helical span at residues 8–28; the sequence is ILFPISWEQSPIFLAVGLIFA. 2 N-linked (GlcNAc...) asparagine glycosylation sites follow: N76 and N373. C452 is a heme binding site.

The protein belongs to the cytochrome P450 family. It depends on heme as a cofactor.

The protein resides in the membrane. It participates in secondary metabolite biosynthesis. Functionally, cytochrome P450 monooxygenase; part of the gene cluster that mediates the biosynthesis of the indole diterpenes nodulisporic acids (NA). Nodulisporic acid A (NAA) and its chemically modified derivatives are of particular significance because of their highly potent insecticidal activity against blood-feeding arthropods and lack of observable adverse effects on mammals, in particular the tremogenicity associated with the paspaline-derived IDTs is not observed. The geranylgeranyl diphosphate (GGPP) synthase ggs1, localized outside of the cluster, is proposed to catalyze the first step in nodulisporic acid biosynthesis via conversion of farnesyl pyrophosphate and isopentyl pyrophosphate into geranylgeranyl pyrophosphate (GGPP). Condensation of indole-3-glycerol phosphate with GGPP by the prenyl transferase nodC then forms 3-geranylgeranylindole (3-GGI). Epoxidation by the FAD-dependent monooxygenase nodM leads to a single-epoxidized-GGI that is substrate of the terpene cyclase nodB for cyclization to yield emindole SB. The terminal methyl carbon, C28, of emindole SB is then oxidized by the cytochrome P450 monooxygenase nodW to produce nodulisporic acid F (NAF), the pentacyclic core of NAA. NAF is converted to nodulisporic acid E (NAE) via prenylation. This step is probably performed by one of the indole diterpene prenyltransferases nodD1 or nodD2. Several oxidation steps performed by the FAD-linked oxidoreductase nodO and one of the cytochrome P450 monooxygenase nodR, nodX or nodZ further convert NAE to nodulisporic acid D (NAD). NAD is substrate of cytochrome P450 monooxygenase nodJ to produce the precursor of nodulisporic acid C (NAC), converted to NAC by one of the indole diterpene prenyltransferases nodD1 or nodD2. The FAD-dependent monooxygenase nodY2 then oxidizes NAC to nodulisporic acid B (NAB). Finally NAB is converted to NAA by one of the cytochrome P450 monooxygenases nodR, nodX or nodZ. The polypeptide is Cytochrome P450 monooxygenase nodR (Hypoxylon pulicicidum).